The sequence spans 193 residues: Allatostatin A (193 aa).

The N-terminal stretch at 1–25 is a signal peptide; the sequence is MKTSSLIAMRLIIFYLLSVVGRSTA. Residues 26–64 constitute a propeptide that is removed on maturation; it reads AVEEAPASSLHIPRLNPLSSNLEYDEPSEKRAYAYISEY. I74 carries the post-translational modification Isoleucine amide. Positions 78 to 84 are excised as a propeptide; the sequence is WIDNSED. Isoleucine amide occurs at positions 94 and 105. A propeptide spanning residues 109–139 is cleaved from the precursor; sequence NSGYRPLGMDFSVDNMDFHSREDNLDDFIDD. Residue I150 is modified to Isoleucine amide. S165 carries the post-translational modification Serine amide. Residues 169 to 193 constitute a propeptide that is removed on maturation; sequence LNDVVGPKYLLGLGKGLSENENLIQ.

It belongs to the allatostatin family. In terms of tissue distribution, allatostatins A1, A2 and A3 are expressed in brain, antennal lobes, optical lobes, gnathal ganglia, the retrocerebral complex and thoracic, abdominal and ventral ganglia. Allatostain A4 is expressed in brain (at protein level).

The protein localises to the secreted. May act as a neurotransmitter or neuromodulator. In Camponotus floridanus (Florida carpenter ant), this protein is Allatostatin A.